A 132-amino-acid polypeptide reads, in one-letter code: Small ribosomal subunit protein uS8 (132 aa).

Belongs to the universal ribosomal protein uS8 family. Part of the 30S ribosomal subunit. Contacts proteins S5 and S12.

Functionally, one of the primary rRNA binding proteins, it binds directly to 16S rRNA central domain where it helps coordinate assembly of the platform of the 30S subunit. This Streptomyces griseus subsp. griseus (strain JCM 4626 / CBS 651.72 / NBRC 13350 / KCC S-0626 / ISP 5235) protein is Small ribosomal subunit protein uS8.